Here is a 150-residue protein sequence, read N- to C-terminus: Ribonuclease H (150 aa).

Residues 1-141 (MKSIEVHTDG…VDVLARNQAI (141 aa)) form the RNase H type-1 domain. Positions 9, 47, 69, and 133 each coordinate Mg(2+).

The protein belongs to the RNase H family. In terms of assembly, monomer. It depends on Mg(2+) as a cofactor.

The protein resides in the cytoplasm. The enzyme catalyses Endonucleolytic cleavage to 5'-phosphomonoester.. Endonuclease that specifically degrades the RNA of RNA-DNA hybrids. This Xanthomonas campestris pv. campestris (strain 8004) protein is Ribonuclease H.